A 343-amino-acid chain; its full sequence is Dihydroorotase (343 aa).

His-13 and His-15 together coordinate Zn(2+). Residues 15–17 (HLR) and Asn-41 each bind substrate. Residues Lys-99, His-136, and His-174 each contribute to the Zn(2+) site. The residue at position 99 (Lys-99) is an N6-carboxylysine. Residue His-136 coordinates substrate. Leu-219 contributes to the substrate binding site. Zn(2+) is bound at residue Asp-247. Asp-247 is a catalytic residue. Substrate contacts are provided by His-251 and Ala-263.

This sequence belongs to the metallo-dependent hydrolases superfamily. DHOase family. Class II DHOase subfamily. As to quaternary structure, homodimer. It depends on Zn(2+) as a cofactor.

It carries out the reaction (S)-dihydroorotate + H2O = N-carbamoyl-L-aspartate + H(+). It participates in pyrimidine metabolism; UMP biosynthesis via de novo pathway; (S)-dihydroorotate from bicarbonate: step 3/3. In terms of biological role, catalyzes the reversible cyclization of carbamoyl aspartate to dihydroorotate. The polypeptide is Dihydroorotase (Shewanella putrefaciens (strain CN-32 / ATCC BAA-453)).